The primary structure comprises 250 residues: Exotoxin type A (250 aa).

The signal sequence occupies residues 1–30; the sequence is MENNKEVLKKMVFFVLMKFLGLTILPKGIC. C117 and C128 are joined by a disulfide.

The protein belongs to the staphylococcal/streptococcal toxin family.

Its function is as follows. Causative agent of the symptoms associated with scarlet fever, have been associated with streptococcal toxic shock-like disease and may play a role in the early events of rheumatic fever. This Streptococcus pyogenes protein is Exotoxin type A (speA).